We begin with the raw amino-acid sequence, 833 residues long: Putative GPI inositol-deacylase C (833 aa).

Residue Ser130 is part of the active site. Asn191 and Asn456 each carry an N-linked (GlcNAc...) asparagine glycan. 5 consecutive transmembrane segments (helical) span residues 521-541, 560-580, 617-637, 672-692, and 723-743; these read ILFISLPSAILYAIFLVQFHA, YLLTSCLAGSGIAYLTGLSQV, VLAPIFTVFSTGMVVLITELV, TVFVAVISVLVLLFFPYQLAF, and TICVLMTWTCIINAPVLAVWI. Asn772 carries N-linked (GlcNAc...) asparagine glycosylation. A helical membrane pass occupies residues 787 to 807; it reads LLLAYTSLHCLFYGMMQAFMI.

The protein belongs to the GPI inositol-deacylase family.

Its subcellular location is the endoplasmic reticulum membrane. In terms of biological role, involved in inositol deacylation of GPI-anchored proteins which plays important roles in the quality control and ER-associated degradation of GPI-anchored proteins. The sequence is that of Putative GPI inositol-deacylase C (BST1C) from Yarrowia lipolytica (strain CLIB 122 / E 150) (Yeast).